A 271-amino-acid polypeptide reads, in one-letter code: MSKIQSTFQRLQVTGRRALIPFITAGDPAPELTVPLMNALVEGGADIIELGVPFSDPMADGPTIQRASERALANGMTLRRVLDTVREFRTGNAETPVVLMGYANPIEAMGVERFVSAAREAQVDGVLIVDYPPEECESFARAAKDAGLDPIFLLAPTSTEQRFRDVARVGSGYIYYVSLKGVTGSATLDFDEVAARIPQIRAQVGMPVGVGFGIRDAESARRIGEVADAVVIGSRIIEEIERSPRDRLAANVTAFLREVRTALDQVEGSVR.

Residues Glu49 and Asp60 each act as proton acceptor in the active site.

The protein belongs to the TrpA family. Tetramer of two alpha and two beta chains.

The enzyme catalyses (1S,2R)-1-C-(indol-3-yl)glycerol 3-phosphate + L-serine = D-glyceraldehyde 3-phosphate + L-tryptophan + H2O. It participates in amino-acid biosynthesis; L-tryptophan biosynthesis; L-tryptophan from chorismate: step 5/5. Functionally, the alpha subunit is responsible for the aldol cleavage of indoleglycerol phosphate to indole and glyceraldehyde 3-phosphate. The sequence is that of Tryptophan synthase alpha chain from Aromatoleum aromaticum (strain DSM 19018 / LMG 30748 / EbN1) (Azoarcus sp. (strain EbN1)).